We begin with the raw amino-acid sequence, 450 residues long: Glucose-6-phosphate isomerase (450 aa).

A Phosphothreonine modification is found at Thr39. Residue Glu291 is the Proton donor of the active site. Catalysis depends on residues His312 and Lys426.

The protein belongs to the GPI family.

Its subcellular location is the cytoplasm. The catalysed reaction is alpha-D-glucose 6-phosphate = beta-D-fructose 6-phosphate. It functions in the pathway carbohydrate biosynthesis; gluconeogenesis. The protein operates within carbohydrate degradation; glycolysis; D-glyceraldehyde 3-phosphate and glycerone phosphate from D-glucose: step 2/4. Catalyzes the reversible isomerization of glucose-6-phosphate to fructose-6-phosphate. This chain is Glucose-6-phosphate isomerase, found in Bacillus mycoides (strain KBAB4) (Bacillus weihenstephanensis).